Reading from the N-terminus, the 393-residue chain is Probable pectinesterase 8 (393 aa).

An N-terminal signal peptide occupies residues 1 to 19; sequence MKIISLSISIGIAIIAVLA. N-linked (GlcNAc...) asparagine glycosylation is found at asparagine 100, asparagine 113, asparagine 140, asparagine 156, and asparagine 163. Substrate is bound at residue threonine 165. Residue asparagine 182 is glycosylated (N-linked (GlcNAc...) asparagine). Glutamine 200 contacts substrate. Residue aspartate 223 is the Proton donor of the active site. Catalysis depends on aspartate 244, which acts as the Nucleophile. Asparagine 295 carries an N-linked (GlcNAc...) asparagine glycan. Arginine 308 contributes to the substrate binding site. Asparagine 350, asparagine 369, and asparagine 378 each carry an N-linked (GlcNAc...) asparagine glycan.

It belongs to the pectinesterase family. As to expression, expressed in siliques.

The protein resides in the secreted. It is found in the cell wall. The enzyme catalyses [(1-&gt;4)-alpha-D-galacturonosyl methyl ester](n) + n H2O = [(1-&gt;4)-alpha-D-galacturonosyl](n) + n methanol + n H(+). It functions in the pathway glycan metabolism; pectin degradation; 2-dehydro-3-deoxy-D-gluconate from pectin: step 1/5. Acts in the modification of cell walls via demethylesterification of cell wall pectin. The chain is Probable pectinesterase 8 (PME8) from Arabidopsis thaliana (Mouse-ear cress).